The following is a 60-amino-acid chain: Hemocyte defensin Cg-Defh2 (60 aa).

The N-terminal stretch at 1 to 17 is a signal peptide; that stretch reads LLTLAVLLMVSADMAFA. Beta-D-GlcNAc-(1-&gt;4)-Mur2Ac(oyl-L-Ala-gamma-D-Glu-L-Lys-D-Ala-D-Ala)-di-trans,octa-cis-undecaprenyl diphosphate is bound by residues F19, G20, and C21. 4 disulfide bridges follow: C21-C42, C28-C51, C32-C53, and C37-C56. The segment at 22-25 is binds to membrane interface; that stretch reads PGDQ. H31 provides a ligand contact to beta-D-GlcNAc-(1-&gt;4)-Mur2Ac(oyl-L-Ala-gamma-D-Glu-L-Lys-D-Ala-D-Ala)-di-trans,octa-cis-undecaprenyl diphosphate. Residues 43–49 are binds to membrane interface; the sequence is DAVTLWL. C51 provides a ligand contact to beta-D-GlcNAc-(1-&gt;4)-Mur2Ac(oyl-L-Ala-gamma-D-Glu-L-Lys-D-Ala-D-Ala)-di-trans,octa-cis-undecaprenyl diphosphate.

The protein belongs to the invertebrate defensin family. As to expression, expressed in hemocytes.

It is found in the secreted. The protein localises to the target cell membrane. Functionally, antibacterial peptide mostly active against Gram-positive bacteria. It acts by selectively inhibiting peptidoglycan biosynthesis through complex formation with the cell wall precursor lipid II (1:1 molar ratio) thus inhibiting cell wall synthesis. It does not disrupt cell membranes. Is noticeably more potent than Cg-Defh1. This chain is Hemocyte defensin Cg-Defh2, found in Magallana gigas (Pacific oyster).